The chain runs to 599 residues: Elongation factor 4 (599 aa).

The 183-residue stretch at 3–185 folds into the tr-type G domain; sequence KNIRNFSIIA…AIVERIPPPS (183 aa). GTP-binding positions include 15–20 and 132–135; these read DHGKST and NKID.

The protein belongs to the TRAFAC class translation factor GTPase superfamily. Classic translation factor GTPase family. LepA subfamily.

It is found in the cell membrane. It carries out the reaction GTP + H2O = GDP + phosphate + H(+). Functionally, required for accurate and efficient protein synthesis under certain stress conditions. May act as a fidelity factor of the translation reaction, by catalyzing a one-codon backward translocation of tRNAs on improperly translocated ribosomes. Back-translocation proceeds from a post-translocation (POST) complex to a pre-translocation (PRE) complex, thus giving elongation factor G a second chance to translocate the tRNAs correctly. Binds to ribosomes in a GTP-dependent manner. The sequence is that of Elongation factor 4 from Syntrophomonas wolfei subsp. wolfei (strain DSM 2245B / Goettingen).